A 142-amino-acid chain; its full sequence is Hemoglobin subunit alpha-2 (142 aa).

Residues 2 to 142 (VLSPADKTNV…VSTVLTSKYR (141 aa)) enclose the Globin domain. O2 is bound at residue His-59. His-88 contributes to the heme b binding site.

It belongs to the globin family. In terms of assembly, heterotetramer of two alpha chains and two beta chains. Red blood cells.

Involved in oxygen transport from the lung to the various peripheral tissues. The sequence is that of Hemoglobin subunit alpha-2 from Arctocephalus galapagoensis (Galapagoes fur seal).